The following is a 289-amino-acid chain: Serine/threonine-protein phosphatase Pgam5, mitochondrial (289 aa).

The protein belongs to the phosphoglycerate mutase family. BPG-dependent PGAM subfamily. Interacts with Pk92B/ASK1.

Its subcellular location is the mitochondrion outer membrane. The catalysed reaction is O-phospho-L-seryl-[protein] + H2O = L-seryl-[protein] + phosphate. The enzyme catalyses O-phospho-L-threonyl-[protein] + H2O = L-threonyl-[protein] + phosphate. Its function is as follows. Displays phosphatase activity for serine/threonine residues, and dephosphorylates and activates Pk92B kinase. Has apparently no phosphoglycerate mutase activity. This Drosophila grimshawi (Hawaiian fruit fly) protein is Serine/threonine-protein phosphatase Pgam5, mitochondrial.